Consider the following 226-residue polypeptide: 7-cyano-7-deazaguanine synthase (226 aa).

8–18 (ISGGLDSTTCL) provides a ligand contact to ATP. C188, C198, C201, and C204 together coordinate Zn(2+).

This sequence belongs to the QueC family. The cofactor is Zn(2+).

The catalysed reaction is 7-carboxy-7-deazaguanine + NH4(+) + ATP = 7-cyano-7-deazaguanine + ADP + phosphate + H2O + H(+). It participates in purine metabolism; 7-cyano-7-deazaguanine biosynthesis. Functionally, catalyzes the ATP-dependent conversion of 7-carboxy-7-deazaguanine (CDG) to 7-cyano-7-deazaguanine (preQ(0)). In Coxiella burnetii (strain RSA 331 / Henzerling II), this protein is 7-cyano-7-deazaguanine synthase.